A 1192-amino-acid polypeptide reads, in one-letter code: DNA topoisomerase 2 (1192 aa).

ATP-binding positions include asparagine 64, asparagine 95, and 142-149 (GTNGVGLK). Mg(2+) is bound by residues glutamate 438, aspartate 539, and aspartate 541. A Topo IIA-type catalytic domain is found at 707–1174 (IPNFLDGMTR…PGASVWLEEI (468 aa)). Catalysis depends on tyrosine 800, which acts as the O-(5'-phospho-DNA)-tyrosine intermediate.

Belongs to the type II topoisomerase family. Mg(2+) is required as a cofactor. Mn(2+) serves as cofactor. The cofactor is Ca(2+).

The protein localises to the host cytoplasm. The enzyme catalyses ATP-dependent breakage, passage and rejoining of double-stranded DNA.. Its function is as follows. Type II topoisomerase. Processively relaxes supercoiled DNA. Displays DNA-supercoiling activity only when associated with the viral histone-like protein. In African swine fever virus (isolate Tick/South Africa/Pretoriuskop Pr4/1996) (ASFV), this protein is DNA topoisomerase 2.